Consider the following 80-residue polypeptide: Sulfur carrier protein TusA (80 aa).

Residue Cys17 is the Cysteine persulfide intermediate of the active site.

This sequence belongs to the sulfur carrier protein TusA family.

It is found in the cytoplasm. Functionally, sulfur carrier protein which probably makes part of a sulfur-relay system. The sequence is that of Sulfur carrier protein TusA from Pseudomonas putida (strain GB-1).